Consider the following 123-residue polypeptide: UPF0102 protein VSAL_I2655 (123 aa).

It belongs to the UPF0102 family.

The chain is UPF0102 protein VSAL_I2655 from Aliivibrio salmonicida (strain LFI1238) (Vibrio salmonicida (strain LFI1238)).